The sequence spans 239 residues: Ribosomal RNA small subunit methyltransferase G (239 aa).

S-adenosyl-L-methionine contacts are provided by residues G78, F83, 129 to 130 (AE), and R148.

Belongs to the methyltransferase superfamily. RNA methyltransferase RsmG family.

Its subcellular location is the cytoplasm. Specifically methylates the N7 position of a guanine in 16S rRNA. This Clostridium botulinum (strain Okra / Type B1) protein is Ribosomal RNA small subunit methyltransferase G.